We begin with the raw amino-acid sequence, 647 residues long: DNA ligase (647 aa).

NAD(+)-binding positions include 30–34, 79–80, and E105; these read DEEYD and SM. The active-site N6-AMP-lysine intermediate is the K107. The NAD(+) site is built by R128, E162, and K301. Zn(2+)-binding residues include C395, C398, C411, and C416. Positions 570–647 constitute a BRCT domain; sequence KSDGVIFGKT…ESAFNELVKE (78 aa).

It belongs to the NAD-dependent DNA ligase family. LigA subfamily. Mg(2+) is required as a cofactor. Requires Mn(2+) as cofactor.

The enzyme catalyses NAD(+) + (deoxyribonucleotide)n-3'-hydroxyl + 5'-phospho-(deoxyribonucleotide)m = (deoxyribonucleotide)n+m + AMP + beta-nicotinamide D-nucleotide.. In terms of biological role, DNA ligase that catalyzes the formation of phosphodiester linkages between 5'-phosphoryl and 3'-hydroxyl groups in double-stranded DNA using NAD as a coenzyme and as the energy source for the reaction. It is essential for DNA replication and repair of damaged DNA. The protein is DNA ligase of Campylobacter jejuni subsp. jejuni serotype O:23/36 (strain 81-176).